The chain runs to 401 residues: UPF0242 protein CPn_0755/CP_1117/CPj0755/CpB0783 (401 aa).

The protein belongs to the UPF0242 family.

The chain is UPF0242 protein CPn_0755/CP_1117/CPj0755/CpB0783 from Chlamydia pneumoniae (Chlamydophila pneumoniae).